Reading from the N-terminus, the 561-residue chain is MSDNIPSFRWVQSLRRGLSNWTHPVKADVLSDTRALLSALDFHKVAQVQRMVRKDKRTDSDLTKLRDMNKEVDALMNMRSVQRDNVLKVGGLAKEELMELASDLDKLRKKVTRTEGLSQPGVYEGNLTNTQLEQRAEILRSMGFANARPAGNRDGVVKVWDIKDNTLLINQFGSMPALTIACMTEQGGEQLNDVVQALSALGLLYTVKFPNMTDLEKLTQQHSALKIISHEPSALNISGYNLSLSAAVKAAACMIDGGNMLETIQVKPSMFSTLIKSLLQIKNREGMFVSTTPGQRNPYENLLYKICLSGDGWPYIGSRSQVQGRAWDNTTVDLDSKPSAIQPPVRNGGSPDLKQIPKEKEDTVVSSIQMLDPRATTWIDIEGTPNDPVEMAIYQPDTGNYIHCYRFPHDEKSFKEQSKYSHGLLLKDLADAQPGLISSIIRHLPQNMVFTAQGSDDIIRLFEMHGRRDLKVLDVKLSAEQARTFEDEIWERYNQLCTKHKGLVIKKKKKGAVQTTANPHCALLDTIMFDATVTGWVRDQKPMRCLPIDTLYRNNTDLINL.

The tract at residues 52–237 is binding site for the cap structure m7GTP; the sequence is VRKDKRTDSD…ISHEPSALNI (186 aa). Residues 336 to 355 are disordered; sequence SKPSAIQPPVRNGGSPDLKQ. Positions 380 and 382 each coordinate Mn(2+). Residues Glu390, Cys497, His500, and Cys521 each contribute to the Zn(2+) site. Asp525 provides a ligand contact to Mn(2+).

This sequence belongs to the arenaviridae nucleocapsid protein family. Homomultimerizes to form the nucleocapsid. Binds to viral genomic RNA. Interacts with glycoprotein G2. Interacts with protein Z; this interaction probably directs the encapsidated genome to budding sites. Interacts with protein L; this interaction does not interfere with Z-L interaction. Interacts with host IKBKE (via Protein kinase domain); the interaction inhibits IKBKE kinase activity.

Its subcellular location is the virion. It localises to the host cytoplasm. Encapsidates the genome, protecting it from nucleases. The encapsidated genomic RNA is termed the nucleocapsid (NC). Serves as template for viral transcription and replication. The increased presence of protein N in host cell does not seem to trigger the switch from transcription to replication as observed in other negative strain RNA viruses. Through the interaction with host IKBKE, strongly inhibits the phosphorylation and nuclear translocation of host IRF3, a protein involved in interferon activation pathway, leading to the inhibition of interferon-beta and IRF3-dependent promoters activation. Also encodes a functional 3'-5' exoribonuclease that degrades preferentially dsRNA substrates and thereby participates in the suppression of interferon induction. This is Nucleoprotein from Cavia cutleri (Guinea pig).